The following is a 574-amino-acid chain: Serine carboxypeptidase ctsa-3.1 (574 aa).

The N-terminal stretch at 1–19 is a signal peptide; the sequence is MCRTLLGVAFLVVTVLSQG. 2 N-linked (GlcNAc...) asparagine glycosylation sites follow: Asn48 and Asn163. Ser172 is a catalytic residue. 4 N-linked (GlcNAc...) asparagine glycosylation sites follow: Asn241, Asn408, Asn414, and Asn426. Residues Asp441 and His507 contribute to the active site. A glycan (N-linked (GlcNAc...) asparagine) is linked at Asn534.

Belongs to the peptidase S10 family.

This chain is Serine carboxypeptidase ctsa-3.1, found in Caenorhabditis elegans.